Here is a 363-residue protein sequence, read N- to C-terminus: MKESVIRKLEGLLERNEEVMALLGDASVISDQDRFRALSKEYAQLEDVVAGFKAYQQAQVDLDSAKEMLEEDDAEMREMAQEEMKAAKAKLEHLEDELQILLLPKDPDDDKNAFVEIRAGAGGDEAAIFAGDLFRMYSRYAEANRWQIEIMSCNEGEHGGFKEVIMKVSGDGVYGKLKFESGGHRVQRVPETESQGRVHTSAVTVVVLHEVPEAEAISINPADLKVDTFRSSGAGGQHVNKTDSAIRITHIPTGIVVECQDQRSQHKNRAQAMSVLAARIQALEDEKRRSAEESTRRSLVASGDRSERVRTYNFPQGRVSEHRINLTLYRLNEVMEGDLDAILLPLMQEHQADQLAALADEQG.

Gln-237 is modified (N5-methylglutamine). The segment covering 286-296 (EKRRSAEESTR) has biased composition (basic and acidic residues). Residues 286-305 (EKRRSAEESTRRSLVASGDR) are disordered.

Belongs to the prokaryotic/mitochondrial release factor family. In terms of processing, methylated by PrmC. Methylation increases the termination efficiency of RF1.

The protein resides in the cytoplasm. In terms of biological role, peptide chain release factor 1 directs the termination of translation in response to the peptide chain termination codons UAG and UAA. In Shewanella baltica (strain OS155 / ATCC BAA-1091), this protein is Peptide chain release factor 1.